Consider the following 308-residue polypeptide: Acetaldehyde dehydrogenase (308 aa).

10–13 (SGNI) contacts NAD(+). Cys128 acts as the Acyl-thioester intermediate in catalysis. NAD(+) contacts are provided by residues 159–167 (SAGPGTRAN) and Asn285.

This sequence belongs to the acetaldehyde dehydrogenase family.

It catalyses the reaction acetaldehyde + NAD(+) + CoA = acetyl-CoA + NADH + H(+). In Salinispora tropica (strain ATCC BAA-916 / DSM 44818 / JCM 13857 / NBRC 105044 / CNB-440), this protein is Acetaldehyde dehydrogenase.